Here is a 336-residue protein sequence, read N- to C-terminus: Glyceraldehyde-3-phosphate dehydrogenase (336 aa).

NAD(+) contacts are provided by residues 12 to 13 (RI), aspartate 34, arginine 78, and threonine 121. Residues 151 to 153 (SCT), threonine 182, arginine 199, 212 to 213 (TG), and arginine 235 each bind D-glyceraldehyde 3-phosphate. Cysteine 152 functions as the Nucleophile in the catalytic mechanism. Residue asparagine 316 participates in NAD(+) binding.

The protein belongs to the glyceraldehyde-3-phosphate dehydrogenase family. As to quaternary structure, homotetramer.

The protein localises to the cytoplasm. The catalysed reaction is D-glyceraldehyde 3-phosphate + phosphate + NAD(+) = (2R)-3-phospho-glyceroyl phosphate + NADH + H(+). The protein operates within carbohydrate degradation; glycolysis; pyruvate from D-glyceraldehyde 3-phosphate: step 1/5. Its function is as follows. Catalyzes the oxidative phosphorylation of glyceraldehyde 3-phosphate (G3P) to 1,3-bisphosphoglycerate (BPG) using the cofactor NAD. The first reaction step involves the formation of a hemiacetal intermediate between G3P and a cysteine residue, and this hemiacetal intermediate is then oxidized to a thioester, with concomitant reduction of NAD to NADH. The reduced NADH is then exchanged with the second NAD, and the thioester is attacked by a nucleophilic inorganic phosphate to produce BPG. The protein is Glyceraldehyde-3-phosphate dehydrogenase (gap) of Streptococcus pyogenes serotype M1.